A 251-amino-acid chain; its full sequence is Segregation and condensation protein A (251 aa).

Belongs to the ScpA family. Component of a cohesin-like complex composed of ScpA, ScpB and the Smc homodimer, in which ScpA and ScpB bind to the head domain of Smc. The presence of the three proteins is required for the association of the complex with DNA.

The protein localises to the cytoplasm. Participates in chromosomal partition during cell division. May act via the formation of a condensin-like complex containing Smc and ScpB that pull DNA away from mid-cell into both cell halves. The protein is Segregation and condensation protein A of Exiguobacterium sibiricum (strain DSM 17290 / CCUG 55495 / CIP 109462 / JCM 13490 / 255-15).